Consider the following 1856-residue polypeptide: MALVGVDFQAPLRIVSRVQFGILGPEEIKRMSVAHVEFPEVYENGKPKLGGLMDPRQGVIDRRGRCMTCAGNLTDCPGHFGHLELAKPVFHIGFLTKTLKILRCVCFYCGRLLIDKSAPRVLEILKKTGTNSKKRLTMIYDLCKAKSVCEGAAEKEEGMPDDPDDPMNDGKKVAGGCGRYQPSYRRVGIDINAEWKKNVNEDTQERKIMLTAERVLEVFQQITDEDILVIGMDPQFARPEWMICTVLPVPPLAVRPAVVTFGSAKNQDDLTHKLSDIIKTNQQLQRNEANGAAAHVLTDDVRLLQFHVATLVDNCIPGLPTATQKGGRPLKSIKQRLKGKEGRIRGNLMGKRVDFSARTVITADPNLPIDTVGVPRTIAQNLTFPEIVTPFNVDKLQELVNRGDTQYPGAKYIIRENGARVDLRYHPRAADLHLQPGYRVERHMKDGDIIVFNRQPTLHKMSMMGHRVKILPWSTFRMNLSVTSPYNADFDGDEMNLHLPQSLETRAEIEEIAMVPRQLITPQANKPVMGIVQDTLCAVRMMTKRDVFIDWPFMMDLLMYLPTWDGKVPQPAILKPKPLWTGKQVFSLIIPGNVNVLRTHSTHPDSEDSGPYKWISPGDTKVIIEHGELLSGIVCSKTVGKSAGNLLHVVTLELGYEIAANFYSHIQTVINAWLIREGHTIGIGDTIADQATYLDIQNTIRKAKQDVVDVIEKAHNDDLEPTPGNTLRQTFENKVNQILNDARDRTGSSAQKSLSEFNNFKSMVVSGSKGSKINISQVIACVGQQNVEGKRIPFGFRHRTLPHFIKDDYGPESKGFVENSYLAGLTPSEFFFHAMGGREGLIDTAVKTAETGYIQRRLIKAMESVMVNYDGTVRNSLAQMVQLRYGEDGLDGMWVENQNMPTMKPNNAVFERDFRMDLTDNKFLRKNYSEDVVREIQESEDGISLVESEWSQLEEDRRLLRKIFPRGDAKIVLPCNLQRLIWNAQKIFKVDLRKPVNLSPLHVISGVRELSKKLIIVSGNDEISKQAQYNATLLMNILLRSTLCTKNMCTKSKLNSEAFDWLLGEIESRFQQAIAQPGEMVGALAAQSLGEPATQMTLNTFHYAGVSAKNVTLGVPRLKEIINVSKTLKTPSLTVFLTGAAAKDPEKAKDVLCKLEHTTLKKVTCNTAIYYDPDPKNTVIAEDEEWVSIFYEMPDHDLSRTSPWLLRIELDRKRMVDKKLTMEMIADRIHGGFGNDVHTIYTDDNAEKLVFRLRIAGEDKGEAQEEQVDKMEDDVFLRCIEANMLSDLTLQGIPAISKVYMNQPNTDDKKRIIITPEGGFKSVADWILETDGTALLRVLSERQIDPVRTTSNDICEIFEVLGIEAVRKAIEREMDNVISFDGSYVNYRHLALLCDVMTAKGHLMAITRHGINRQEVGALMRCSFEETVDILMEAAVHAEEDPVKGVSENIMLGQLARCGTGCFDLVLDVEKCKYGMEIPQNVVMGGGFYGSFAGSPSNREFSPAHSPWNSGVTPTYAGAAWSPTTGGMSPGAGFSPAGNTDGGASPFNEGGWSPASPGDPLGALSPRTPSYGGMSPGVYSPSSPQFSMTSPHYSPTSPSYSPTSPAAGQSPVSPSYSPTSPSYSPTSPSYSPTSPSYSPTSPSYSPTSPSYSPTSPSYSPSSPSYSPSSPSYSPSSPRYSPTSPTYSPTSPTYSPTSPTYSPTSPTYSPTSPSYESGGGYSPSSPKYSPSSPTYSPTSPSYSPTSPQYSPTSPQYSPSSPTYTPSSPTYNPTSPRGFSSPQYSPTSPTYSPTSPSYTPSSPQYSPTSPTYTPSPSEQPGTSAQYSPTSPTYSPSSPTYSPASPSYSPSSPTYDPNS.

Positions 66, 69, 76, 79, 106, 109, 149, and 177 each coordinate Zn(2+). The segment at 256–268 is lid loop; the sequence is PAVVTFGSAKNQD. A rudder loop region spans residues 314–331; sequence NCIPGLPTATQKGGRPLK. Mg(2+)-binding residues include D489, D491, and D493. The segment at 827-839 is bridging helix; the sequence is PSEFFFHAMGGRE. A Glycyl lysine isopeptide (Lys-Gly) (interchain with G-Cter in ubiquitin) cross-link involves residue K1260. The segment at 1523–1856 is disordered; that stretch reads PTTGGMSPGA…PSSPTYDPNS (334 aa). Positions 1587–1856 are enriched in low complexity; sequence SMTSPHYSPT…PSSPTYDPNS (270 aa). Repeat copies occupy residues 1593–1599, 1600–1606, 1616–1622, 1623–1629, 1630–1636, 1637–1643, 1644–1650, 1651–1657, 1658–1664, 1665–1671, 1672–1678, 1679–1685, 1686–1692, 1693–1699, 1700–1706, 1707–1713, 1720–1726, 1727–1733, 1734–1740, 1741–1747, 1748–1754, 1755–1761, 1769–1775, 1782–1788, 1789–1795, 1796–1802, and 1803–1809. The tract at residues 1593–1816 is C-terminal domain (CTD); 28 X 7 AA approximate tandem repeats of Y-[ST]-P-[ST]-S-P-[AGKNQRST]; that stretch reads YSPTSPSYSP…SPTYTPSPSE (224 aa). Residues 1810 to 1816 form a 28; approximate repeat; it reads YTPSPSE.

The protein belongs to the RNA polymerase beta' chain family. As to quaternary structure, component of the RNA polymerase II (Pol II) complex consisting of 12 subunits. Interacts with sig-7. Post-translationally, the tandem 7 residues repeats in the C-terminal domain (CTD) can be highly phosphorylated. The phosphorylation activates Pol II. Phosphorylation occurs mainly at residues 'Ser-2' and 'Ser-5' of the heptapeptide repeat and starts at the 3- to 4-cell embryonic stage. This phosphorylation also occurs in the early stages of oocyte development and is not detected in oocytes arrested at the meiotic diakinesis stage. In the somatic lineage, phosphorylation at 'Ser-2' is mediated by cdk-12 downstream of cdk-9 whereas in the germline lineage cdk-12 phosphorylates 'Ser-2' independently of cdk-9. Phosphorylation is likely mediated by cdk-7. May be dephosphorylated by fcp-1 in diakinetic oocytes and in 1-cell and 2-cell embryos. Dephosphorylated at 'Ser-5' of the heptapeptide repeats by ssup-72. The phosphorylation state is believed to result from the balanced action of site-specific CTD kinases and phosphatase, and a 'CTD code' that specifies the position of Pol II within the transcription cycle has been proposed. Following transcription stress, the elongating form of RNA polymerase II (RNA pol IIo) is polyubiquitinated via 'Lys-63'-linkages on Lys-1260 at DNA damage sites without leading to degradation: ubiquitination promotes RNA pol IIo backtracking to allow access by the transcription-coupled nucleotide excision repair (TC-NER) machinery. Subsequent DEF1-dependent polyubiquitination by the elongin complex via 'Lys-48'-linkages may lead to proteasome-mediated degradation; presumably at stalled RNA pol II where TC-NER has failed, to halt global transcription and enable 'last resort' DNA repair pathways.

It is found in the nucleus. The protein localises to the chromosome. It carries out the reaction RNA(n) + a ribonucleoside 5'-triphosphate = RNA(n+1) + diphosphate. In terms of biological role, DNA-dependent RNA polymerase catalyzes the transcription of DNA into RNA using the four ribonucleoside triphosphates as substrates. Largest and catalytic component of RNA polymerase II which synthesizes mRNA precursors and many functional non-coding RNAs. Forms the polymerase active center together with the second largest subunit. Pol II is the central component of the basal RNA polymerase II transcription machinery. It is composed of mobile elements that move relative to each other. RPB1 is part of the core element with the central large cleft, the clamp element that moves to open and close the cleft and the jaws that are thought to grab the incoming DNA template. At the start of transcription, a single-stranded DNA template strand of the promoter is positioned within the central active site cleft of Pol II. A bridging helix emanates from RPB1 and crosses the cleft near the catalytic site and is thought to promote translocation of Pol II by acting as a ratchet that moves the RNA-DNA hybrid through the active site by switching from straight to bent conformations at each step of nucleotide addition. During transcription elongation, Pol II moves on the template as the transcript elongates. Elongation is influenced by the phosphorylation status of the C-terminal domain (CTD) of Pol II largest subunit (RPB1), which serves as a platform for assembly of factors that regulate transcription initiation, elongation, termination and mRNA processing. Involved in the transcription of several genes including those involved in embryogenesis. This Caenorhabditis elegans protein is DNA-directed RNA polymerase II subunit RPB1.